Here is a 135-residue protein sequence, read N- to C-terminus: BolA-like protein 1 (135 aa).

S81 is modified (phosphoserine). Residues 114 to 135 (WKENPQLDTSPACLGGSKKSRN) form a disordered region.

It belongs to the BolA/IbaG family. As to quaternary structure, interacts with GLRX5.

Its subcellular location is the mitochondrion. Acts as a mitochondrial iron-sulfur (Fe-S) cluster assembly factor that facilitates (Fe-S) cluster insertion into a subset of mitochondrial proteins. Probably acts together with the monothiol glutaredoxin GLRX5. May protect cells against oxidative stress. This is BolA-like protein 1 (BOLA1) from Bos taurus (Bovine).